The sequence spans 149 residues: Small ribosomal subunit protein bS16 (149 aa).

Residues 115–149 (KLKAAKSEADAKAKAEAEAAATEEAPAEEPAAEAE) are disordered. The segment covering 119–131 (AKSEADAKAKAEA) has biased composition (basic and acidic residues). The span at 139–149 (APAEEPAAEAE) shows a compositional bias: acidic residues.

Belongs to the bacterial ribosomal protein bS16 family.

The chain is Small ribosomal subunit protein bS16 from Bifidobacterium adolescentis (strain ATCC 15703 / DSM 20083 / NCTC 11814 / E194a).